Here is a 257-residue protein sequence, read N- to C-terminus: MYSVCDVVRDAVAQSHLCACPNDKLPQCKGVTKAPPECSVFHVAKLQDTKFKWKYTLDPLKAQKLSQINKDIEKDAITLKLLYGIELSPEDLEWWKMQRCLINKKTGAKGGQFANKYLERQDLELLGYSPTPIIGGDFMFTALPDKVLRTIPIAWDRFLNPAMMIFFLIILLCVILGIFYVLVRNTLRRKQKIKQHQMEIKRFIKEKEQDPYIHTSFESWPADPNKEWKELIPVYEAQGYCMADYRKKLGMPPGPNC.

2 consecutive transmembrane segments (helical) span residues 123-143 (LELLGYSPTPIIGGDFMFTAL) and 163-183 (MMIFFLIILLCVILGIFYVLV).

Belongs to the asfivirus C257R family.

It localises to the host membrane. The protein localises to the virion. This African swine fever virus (isolate Warthog/Namibia/Wart80/1980) (ASFV) protein is Transmembrane protein C257L.